The following is a 321-amino-acid chain: MDFFQYFFRYYWQLVYMICLMLYITMYILIYNFTGKTLQTVKYFLYPSCTAMLIAMTMAFATQTRNIDNTHSMALLCDGFCKYIGPTFCFYCYNLYTAFGIVVNLINLHTMYYRTLCLKYLDAKKVRLWTLVFMWHYLCPLIYLIVIITSPQRHLEVSMETLSLHPNFDYTPYLTFGGFSQAQKELLDKAAMSLSLISMYYPLIGTYWKHKAMKMLKSHMSPNTSDATRAMLQTLIKGLNFQILLPMLRYIPLTAIYFMIKYTGEQFLISQYTITVLGTIPCILDPLVQIYFIRDAIRKFLACNSSPVRRIYDSWASRMII.

The next 7 helical transmembrane spans lie at 14–34 (LVYM…YNFT), 41–61 (VKYF…MAFA), 83–103 (YIGP…GIVV), 128–148 (LWTL…IVII), 190–208 (AAMS…GTYW), 240–260 (NFQI…YFMI), and 273–293 (TITV…IYFI).

The protein belongs to the nematode receptor-like protein srd family.

The protein localises to the membrane. In Caenorhabditis elegans, this protein is Serpentine receptor class delta-63 (srd-63).